A 211-amino-acid polypeptide reads, in one-letter code: Dual specificity phosphatase 29 (211 aa).

Residues 47–192 (HVNEVWPGIY…LRTLDIQLAI (146 aa)) enclose the Tyrosine-protein phosphatase domain. A substrate-binding site is contributed by 136-143 (HCAMGRSR). Catalysis depends on cysteine 137, which acts as the Phosphocysteine intermediate.

This sequence belongs to the protein-tyrosine phosphatase family. Non-receptor class dual specificity subfamily.

The protein resides in the cytoplasm. It localises to the nucleus. It catalyses the reaction O-phospho-L-tyrosyl-[protein] + H2O = L-tyrosyl-[protein] + phosphate. It carries out the reaction O-phospho-L-seryl-[protein] + H2O = L-seryl-[protein] + phosphate. The enzyme catalyses O-phospho-L-threonyl-[protein] + H2O = L-threonyl-[protein] + phosphate. Its function is as follows. Dual specificity phosphatase able to dephosphorylate phosphotyrosine, phosphoserine and phosphothreonine residues within the same substrate, with a preference for phosphotyrosine as a substrate. Involved in the modulation of AMPK and MAPK1/2 signaling pathways. The chain is Dual specificity phosphatase 29 (dusp29) from Callorhinchus milii (Ghost shark).